The primary structure comprises 253 residues: tRNA pseudouridine synthase A (253 aa).

The Nucleophile role is filled by aspartate 52. Substrate is bound at residue tyrosine 111.

The protein belongs to the tRNA pseudouridine synthase TruA family. In terms of assembly, homodimer.

It carries out the reaction uridine(38/39/40) in tRNA = pseudouridine(38/39/40) in tRNA. Its function is as follows. Formation of pseudouridine at positions 38, 39 and 40 in the anticodon stem and loop of transfer RNAs. This Methylobacterium radiotolerans (strain ATCC 27329 / DSM 1819 / JCM 2831 / NBRC 15690 / NCIMB 10815 / 0-1) protein is tRNA pseudouridine synthase A.